The sequence spans 350 residues: WD repeat-containing protein DWA2 (350 aa).

WD repeat units follow at residues 39–79 (KEEN…FDQR), 118–158 (AHVG…KSAE), 166–205 (GMRH…KNNS), 206–246 (IERA…FPVQ), 250–290 (GHTH…EHKT), and 311–350 (DYED…LPRR).

In terms of assembly, interacts with ABI5 and DDB1A and DWA1.

The protein resides in the nucleus. Its pathway is protein modification; protein ubiquitination. In terms of biological role, component of the CUL4-RBX1-DDB1-DWA1/DWA2 E3 ubiquitin-protein ligase complex that acts as a negative regulator in abscisic acid (ABA) signaling. May function as the substrate recognition module within this complex leading to ABI5 degradation. Functionally redundant with DWA1. The protein is WD repeat-containing protein DWA2 (DWA2) of Arabidopsis thaliana (Mouse-ear cress).